Reading from the N-terminus, the 699-residue chain is Methylcrotonoyl-CoA carboxylase subunit alpha, mitochondrial (699 aa).

The Biotin carboxylation domain occupies 30 to 475; it reads ITKILIANRG…ETGFIPIHRE (446 aa). ATP contacts are provided by K144, E228, and H263. Residues 148-345 enclose the ATP-grasp domain; sequence KDIMIKAGVP…LVEWQLKVAE (198 aa). R320 is an active-site residue. The region spanning 624–699 is the Biotinyl-binding domain; sequence KGADGVLGSL…EDKKTLAVIV (76 aa). N6-biotinyllysine is present on K665.

Probably a dodecamer composed of six biotin-containing alpha subunits and six beta subunits. It depends on Mn(2+) as a cofactor. Requires biotin as cofactor.

Its subcellular location is the mitochondrion matrix. The enzyme catalyses 3-methylbut-2-enoyl-CoA + hydrogencarbonate + ATP = 3-methyl-(2E)-glutaconyl-CoA + ADP + phosphate + H(+). The protein operates within amino-acid degradation; L-leucine degradation; (S)-3-hydroxy-3-methylglutaryl-CoA from 3-isovaleryl-CoA: step 2/3. In terms of biological role, biotin-attachment subunit of the 3-methylcrotonyl-CoA carboxylase, an enzyme that catalyzes the conversion of 3-methylcrotonyl-CoA to 3-methylglutaconyl-CoA, a critical step for leucine and isovaleric acid catabolism. This is Methylcrotonoyl-CoA carboxylase subunit alpha, mitochondrial (mccA) from Dictyostelium discoideum (Social amoeba).